Here is a 655-residue protein sequence, read N- to C-terminus: UvrABC system protein C (655 aa).

Positions Thr-16 to Leu-95 constitute a GIY-YIG domain. The UVR domain occupies Lys-207 to Val-242.

It belongs to the UvrC family. In terms of assembly, interacts with UvrB in an incision complex.

It localises to the cytoplasm. The UvrABC repair system catalyzes the recognition and processing of DNA lesions. UvrC both incises the 5' and 3' sides of the lesion. The N-terminal half is responsible for the 3' incision and the C-terminal half is responsible for the 5' incision. This Renibacterium salmoninarum (strain ATCC 33209 / DSM 20767 / JCM 11484 / NBRC 15589 / NCIMB 2235) protein is UvrABC system protein C.